Consider the following 141-residue polypeptide: Flagellar assembly factor FliW (141 aa).

This sequence belongs to the FliW family. As to quaternary structure, interacts with translational regulator CsrA and flagellin(s).

It is found in the cytoplasm. Its function is as follows. Acts as an anti-CsrA protein, binds CsrA and prevents it from repressing translation of its target genes, one of which is flagellin. Binds to flagellin and participates in the assembly of the flagellum. The chain is Flagellar assembly factor FliW from Clostridium botulinum (strain Alaska E43 / Type E3).